A 568-amino-acid chain; its full sequence is Sulfate adenylyltransferase (568 aa).

Residues 1–162 (MANSPHGGVL…IEAVNKLNHY (162 aa)) form an N-terminal region. Residues 163–388 (DYVALRYSPA…LRESSPPRAT (226 aa)) are catalytic. Q190 is a sulfate binding site. ATP is bound by residues 190 to 193 (QTRN) and 284 to 287 (GRDH). Active-site residues include T191, R192, and N193. Residue R192 coordinates sulfate. Position 288 (A288) interacts with sulfate. V326 lines the ATP pocket. The tract at residues 389–568 (QGFTIFLTGY…LESEGYFDRL (180 aa)) is allosteric regulation domain; adenylyl-sulfate kinase-like. 3'-phosphoadenylyl sulfate contacts are provided by residues 428 to 431 (DTVR), R445, 471 to 472 (IA), and R510.

In the N-terminal section; belongs to the sulfate adenylyltransferase family. This sequence in the C-terminal section; belongs to the APS kinase family. As to quaternary structure, homohexamer. Dimer of trimers.

Its subcellular location is the cytoplasm. The catalysed reaction is sulfate + ATP + H(+) = adenosine 5'-phosphosulfate + diphosphate. It functions in the pathway sulfur metabolism; hydrogen sulfide biosynthesis; sulfite from sulfate: step 1/3. With respect to regulation, allosterically inhibited by 3'-phosphoadenosine 5'-phosphosulfate (PAPS). In terms of biological role, catalyzes the first intracellular reaction of sulfate assimilation, forming adenosine-5'-phosphosulfate (APS) from inorganic sulfate and ATP. Plays an important role in sulfate activation as a component of the biosynthesis pathway of sulfur-containing amino acids. This Aspergillus terreus protein is Sulfate adenylyltransferase.